Consider the following 126-residue polypeptide: 3-aminoacrylate deaminase RutC (126 aa).

This sequence belongs to the RutC family.

It catalyses the reaction (Z)-3-aminoacrylate + H2O + H(+) = 3-oxopropanoate + NH4(+). Its function is as follows. Involved in pyrimidine catabolism. Catalyzes the deamination of 3-aminoacrylate to malonic semialdehyde, a reaction that can also occur spontaneously. RutC may facilitate the reaction and modulate the metabolic fitness, rather than catalyzing essential functions. The sequence is that of 3-aminoacrylate deaminase RutC from Acinetobacter baylyi (strain ATCC 33305 / BD413 / ADP1).